Here is a 331-residue protein sequence, read N- to C-terminus: Anthranilate phosphoribosyltransferase (331 aa).

Residues G78, G81 to D82, T86, N88 to T91, K106 to S114, and S118 each bind 5-phospho-alpha-D-ribose 1-diphosphate. G78 contacts anthranilate. Residue S90 coordinates Mg(2+). Anthranilate is bound at residue N109. R164 provides a ligand contact to anthranilate. Mg(2+) is bound by residues D222 and E223.

It belongs to the anthranilate phosphoribosyltransferase family. In terms of assembly, homodimer. The cofactor is Mg(2+).

The catalysed reaction is N-(5-phospho-beta-D-ribosyl)anthranilate + diphosphate = 5-phospho-alpha-D-ribose 1-diphosphate + anthranilate. The protein operates within amino-acid biosynthesis; L-tryptophan biosynthesis; L-tryptophan from chorismate: step 2/5. Its function is as follows. Catalyzes the transfer of the phosphoribosyl group of 5-phosphorylribose-1-pyrophosphate (PRPP) to anthranilate to yield N-(5'-phosphoribosyl)-anthranilate (PRA). This Haloferax volcanii (strain ATCC 29605 / DSM 3757 / JCM 8879 / NBRC 14742 / NCIMB 2012 / VKM B-1768 / DS2) (Halobacterium volcanii) protein is Anthranilate phosphoribosyltransferase.